The following is a 1077-amino-acid chain: Teashirt homolog 1 (1077 aa).

3 disordered regions span residues 1–109 (MPRR…VSYP), 139–195 (SGST…SSSS), and 269–298 (GHYRDDNRDKDSEKTKRWSKPRKRSLMEME). Positions 26 to 36 (IDEEHVEDDGL) are enriched in acidic residues. Polar residues-rich tracts occupy residues 57-71 (QSYQNSPVSSATNQD) and 139-152 (SGSTTSTNDASQKE). Residues 164–195 (PVSTTGPTTSTPSTSCSSSTSHSSTTSTSSSS) show a composition bias toward low complexity. C2H2-type zinc fingers lie at residues 246–270 (FRCKDCSAAYDTLVELTVHMNETGH) and 307–331 (LKCMYCGHSFESLQDLSVHMIKTKH). The span at 269-284 (GHYRDDNRDKDSEKTK) shows a compositional bias: basic and acidic residues. A C2H2-type 3; atypical zinc finger spans residues 416–440 (LKCMECGSSHDTLQQLTAHMMVTGH). 2 disordered regions span residues 467–549 (SIPL…KGGL) and 647–720 (TGKV…EPLK). Composition is skewed to basic and acidic residues over residues 496–528 (SEEKKEPEKEKPPVAGDAEKIKEESEDSLEKFE), 647–665 (TGKVNIKKEERPPEKEKSS), and 675–708 (KENKDFPKTEEVSGKPQKKGPEAETGKAKKEGPL). Position 765 is a phosphoserine (Ser-765). The segment at 848–873 (TGRLTPKSSTPSTVSEKSDADGSSFE) is disordered. Residues 853 to 862 (PKSSTPSTVS) are compositionally biased toward polar residues. Residues 885–955 (RKGRQSNWNP…NVKYQLRRTG (71 aa)) constitute a DNA-binding region (homeobox; atypical). 2 consecutive C2H2-type zinc fingers follow at residues 970–992 (FFCNDCASQFRTASTYISHLETH) and 1037–1060 (FQCKLCNRTFASKHAVKLHLSKTH).

It belongs to the teashirt C2H2-type zinc-finger protein family. As to quaternary structure, interacts (via homeobox domain) with APBB1 (via PID domain 1). As to expression, expressed in brain; strongly reduced in post-mortem elderly subjects with Alzheimer disease.

The protein localises to the nucleus. Probable transcriptional regulator involved in developmental processes. May act as a transcriptional repressor (Potential). The chain is Teashirt homolog 1 (TSHZ1) from Homo sapiens (Human).